Reading from the N-terminus, the 82-residue chain is Large ribosomal subunit protein uL23 (82 aa).

Belongs to the universal ribosomal protein uL23 family. As to quaternary structure, part of the 50S ribosomal subunit. Contacts protein L29.

In terms of biological role, binds to 23S rRNA. One of the proteins that surrounds the polypeptide exit tunnel on the outside of the ribosome. This Methanospirillum hungatei JF-1 (strain ATCC 27890 / DSM 864 / NBRC 100397 / JF-1) protein is Large ribosomal subunit protein uL23.